The primary structure comprises 417 residues: Secernin-3 (417 aa).

A propeptide spanning residues 1-5 (MYPRS) is cleaved from the precursor. Cys6 is an active-site residue. Position 6 is a glyoxylic acid (Cys); alternate (Cys6). Cys6 carries the pyruvic acid (Cys); alternate modification.

This sequence belongs to the peptidase C69 family. Secernin subfamily.

Plays a role in thermal nociception. This chain is Secernin-3 (scrn3), found in Danio rerio (Zebrafish).